The following is a 211-amino-acid chain: 2,3-bisphosphoglycerate-dependent phosphoglycerate mutase (211 aa).

Substrate is bound by residues 9 to 16 (RHGQSDWN), 22 to 23 (TG), arginine 61, 88 to 91 (ERDY), lysine 99, 115 to 116 (RR), and 159 to 160 (GN). Histidine 10 (tele-phosphohistidine intermediate) is an active-site residue. Glutamate 88 serves as the catalytic Proton donor/acceptor.

Belongs to the phosphoglycerate mutase family. BPG-dependent PGAM subfamily. As to quaternary structure, homodimer.

It catalyses the reaction (2R)-2-phosphoglycerate = (2R)-3-phosphoglycerate. The protein operates within carbohydrate degradation; glycolysis; pyruvate from D-glyceraldehyde 3-phosphate: step 3/5. Functionally, catalyzes the interconversion of 2-phosphoglycerate and 3-phosphoglycerate. The protein is 2,3-bisphosphoglycerate-dependent phosphoglycerate mutase of Rhizobium etli (strain CIAT 652).